A 443-amino-acid polypeptide reads, in one-letter code: Xaa-Pro dipeptidase (443 aa).

The Mn(2+) site is built by Asp-246, Asp-257, His-339, Glu-384, and Glu-423.

Belongs to the peptidase M24B family. Bacterial-type prolidase subfamily. It depends on Mn(2+) as a cofactor.

The catalysed reaction is Xaa-L-Pro dipeptide + H2O = an L-alpha-amino acid + L-proline. Functionally, splits dipeptides with a prolyl residue in the C-terminal position. This chain is Xaa-Pro dipeptidase, found in Shigella flexneri serotype 5b (strain 8401).